The chain runs to 624 residues: Atypical kinase COQ8B, mitochondrial (624 aa).

The segment at glutamate 90 to lysine 117 is disordered. Residues leucine 189–alanine 205 traverse the membrane as a helical segment. The KxGQ motif motif lies at lysine 249 to glutamine 252. A Protein kinase domain is found at methionine 285–leucine 517. Positions alanine 310–serine 313 match the AAAS motif motif. ATP contacts are provided by residues serine 313, lysine 331, and methionine 418–valine 421. The Proton acceptor role is filled by aspartate 461. The ATP site is built by asparagine 466 and aspartate 480.

It belongs to the protein kinase superfamily. ADCK protein kinase family. Homodimer; homodimerizes via its transmembrane region. Interacts with the multi-subunit COQ enzyme complex.

The protein resides in the mitochondrion membrane. Its subcellular location is the cytoplasm. It localises to the cytosol. The protein localises to the cell membrane. The protein operates within cofactor biosynthesis; ubiquinone biosynthesis. Its function is as follows. Atypical kinase involved in the biosynthesis of coenzyme Q, also named ubiquinone, an essential lipid-soluble electron transporter for aerobic cellular respiration. Its substrate specificity is still unclear: may act as a protein kinase that mediates phosphorylation of COQ3. According to other reports, acts as a small molecule kinase, possibly a lipid kinase that phosphorylates a prenyl lipid in the ubiquinone biosynthesis pathway, as suggested by its ability to bind coenzyme Q lipid intermediates. However, the small molecule kinase activity was not confirmed by another publication. Required for podocyte migration. The chain is Atypical kinase COQ8B, mitochondrial from Danio rerio (Zebrafish).